Here is a 414-residue protein sequence, read N- to C-terminus: Esterase FrsA (414 aa).

The protein belongs to the FrsA family.

The catalysed reaction is a carboxylic ester + H2O = an alcohol + a carboxylate + H(+). Catalyzes the hydrolysis of esters. In Shigella sonnei (strain Ss046), this protein is Esterase FrsA.